Consider the following 129-residue polypeptide: Antimicrobial peptide NK-lysin (129 aa).

The N-terminal stretch at 1-6 (PGLAFS) is a signal peptide. A propeptide spanning residues 7 to 46 (GLTPEHSALARAHPCDGEQFCQNLAPEDPQGDQLLQREEL) is cleaved from the precursor. A Saposin B-type domain is found at 46 to 126 (LGLICESCRK…VDIKICKEKT (81 aa)). 3 disulfide bridges follow: Cys50-Cys122, Cys53-Cys116, and Cys81-Cys91. Positions 125-129 (KTGLI) are excised as a propeptide.

As to expression, cytotoxic T and NK cells.

Its subcellular location is the secreted. Functionally, may be an effector molecule of cytotoxic activity. High activity against E.coli and B.megaterium, moderate against A.calcoaceticus and S.pyogenes. No activity against P.aeruginosa, S.aureus and Salmonella. Has some antifungal activity against C.albicans. The protein is Antimicrobial peptide NK-lysin (NKL) of Sus scrofa (Pig).